The primary structure comprises 325 residues: ATP synthase gamma chain (325 aa).

Belongs to the ATPase gamma chain family. As to quaternary structure, F-type ATPases have 2 components, CF(1) - the catalytic core - and CF(0) - the membrane proton channel. CF(1) has five subunits: alpha(3), beta(3), gamma(1), delta(1), epsilon(1). CF(0) has three main subunits: a, b and c.

The protein localises to the cell membrane. Produces ATP from ADP in the presence of a proton gradient across the membrane. The gamma chain is believed to be important in regulating ATPase activity and the flow of protons through the CF(0) complex. This is ATP synthase gamma chain from Corynebacterium diphtheriae (strain ATCC 700971 / NCTC 13129 / Biotype gravis).